The following is a 317-amino-acid chain: Ribosomal protein L11 methyltransferase (317 aa).

Residues Thr-158, Gly-179, Asp-201, and Asn-244 each contribute to the S-adenosyl-L-methionine site.

The protein belongs to the methyltransferase superfamily. PrmA family.

The protein localises to the cytoplasm. The enzyme catalyses L-lysyl-[protein] + 3 S-adenosyl-L-methionine = N(6),N(6),N(6)-trimethyl-L-lysyl-[protein] + 3 S-adenosyl-L-homocysteine + 3 H(+). Functionally, methylates ribosomal protein L11. The polypeptide is Ribosomal protein L11 methyltransferase (Streptococcus agalactiae serotype Ia (strain ATCC 27591 / A909 / CDC SS700)).